The following is a 376-amino-acid chain: Phytanoyl-CoA hydroxylase-interacting protein-like (376 aa).

The Fibronectin type-III domain maps to 52-161 (VPHNIKISNI…EIIEFCTADY (110 aa)).

This sequence belongs to the PHYHIP family.

In terms of biological role, may play a role in the development of the central system. This chain is Phytanoyl-CoA hydroxylase-interacting protein-like (phyhipl), found in Xenopus tropicalis (Western clawed frog).